Reading from the N-terminus, the 396-residue chain is DNA polymerase processivity factor (396 aa).

Residues 306–396 (AEGGESSQKV…VPKTTFNPLI (91 aa)) form a disordered region. Residues 376 to 386 (SDSSQSRDRGK) show a composition bias toward basic and acidic residues.

It belongs to the herpesviridae DNA polymerase accessory subunit family. Homooligomerizes and adopts an oligomeric ring-shaped structure composed of 6 subunits. Forms a complex with the DNA-binding protein, the DNA polymerase subunit, and the alkaline exonuclease.

The protein resides in the virion tegument. It is found in the host nucleus. Its function is as follows. Plays an essential role in the viral lytic DNA replication by acting as the polymerase accessory subunit. Stimulates the viral DNA polymerase activity and appears to function with it as a holoenzyme. Increases the processivity of the viral polymerase, probably by acting as a sliding clamp that prevents dissociation of the polymerase from the active template. This chain is DNA polymerase processivity factor (ORF59), found in Homo sapiens (Human).